A 1198-amino-acid chain; its full sequence is Fibronectin type-III domain-containing protein 3A (1198 aa).

The span at 188–201 (KKLKDRQGTQKDKM) shows a compositional bias: basic and acidic residues. The tract at residues 188–257 (KKLKDRQGTQ…VDPEMEEKDE (70 aa)) is disordered. Phosphoserine is present on residues serine 203, serine 207, and serine 213. 9 consecutive Fibronectin type-III domains span residues 268–369 (NIVK…TLSC), 373–465 (PPNA…TSGC), 469–562 (VPAS…TCPD), 566–660 (VPVK…TPAV), 664–757 (PCLP…TAPG), 761–851 (QCRP…TPPS), 863–950 (SDDD…TKPL), 951–1045 (PPDP…TPKS), and 1049–1151 (ALKA…TEPP). Lysine 384 carries the N6-acetyllysine modification. The chain crosses the membrane as a helical span at residues 1177 to 1197 (ILVVFAFFSILIAFIIQYFVI).

Belongs to the FNDC3 family. As to expression, testis. Localizes to the acrosome of spermatids, as well as to Leydig cells. Can be detected on the acrosome beginning at steps 2-3 and continuing until step 12 of spermiogenesis.

It is found in the golgi apparatus membrane. Mediates spermatid-Sertoli adhesion during spermatogenesis. This is Fibronectin type-III domain-containing protein 3A (Fndc3a) from Mus musculus (Mouse).